We begin with the raw amino-acid sequence, 309 residues long: Fe-S cluster assembly protein dre2 (309 aa).

An N-terminal SAM-like domain region spans residues methionine 1 to valine 132. Residues proline 133–glutamine 195 are linker. [2Fe-2S] cluster is bound by residues cysteine 207, cysteine 216, cysteine 219, and cysteine 221. Residues cysteine 207–cysteine 221 are fe-S binding site A. Positions 265, 268, 276, and 279 each coordinate [4Fe-4S] cluster. 2 short sequence motifs (cx2C motif) span residues cysteine 265–cysteine 268 and cysteine 276–cysteine 279. The fe-S binding site B stretch occupies residues cysteine 265–cysteine 279.

The protein belongs to the anamorsin family. In terms of assembly, monomer. Interacts with TAH18. Interacts with MIA40. [2Fe-2S] cluster serves as cofactor. The cofactor is [4Fe-4S] cluster.

Its subcellular location is the cytoplasm. It localises to the mitochondrion intermembrane space. Its function is as follows. Component of the cytosolic iron-sulfur (Fe-S) protein assembly (CIA) machinery required for the maturation of extramitochondrial Fe-S proteins. Part of an electron transfer chain functioning in an early step of cytosolic Fe-S biogenesis, facilitating the de novo assembly of a [4Fe-4S] cluster on the scaffold complex CFD1-NBP35. Electrons are transferred to DRE2 from NADPH via the FAD- and FMN-containing protein TAH18. TAH18-DRE2 are also required for the assembly of the diferric tyrosyl radical cofactor of ribonucleotide reductase (RNR), probably by providing electrons for reduction during radical cofactor maturation in the catalytic small subunit RNR2. The polypeptide is Fe-S cluster assembly protein dre2 (Schizosaccharomyces japonicus (strain yFS275 / FY16936) (Fission yeast)).